We begin with the raw amino-acid sequence, 150 residues long: D-aminoacyl-tRNA deacylase (150 aa).

The Gly-cisPro motif, important for rejection of L-amino acids motif lies at 140–141; sequence GP.

This sequence belongs to the DTD family. Homodimer.

It localises to the cytoplasm. The catalysed reaction is glycyl-tRNA(Ala) + H2O = tRNA(Ala) + glycine + H(+). The enzyme catalyses a D-aminoacyl-tRNA + H2O = a tRNA + a D-alpha-amino acid + H(+). Functionally, an aminoacyl-tRNA editing enzyme that deacylates mischarged D-aminoacyl-tRNAs. Also deacylates mischarged glycyl-tRNA(Ala), protecting cells against glycine mischarging by AlaRS. Acts via tRNA-based rather than protein-based catalysis; rejects L-amino acids rather than detecting D-amino acids in the active site. By recycling D-aminoacyl-tRNA to D-amino acids and free tRNA molecules, this enzyme counteracts the toxicity associated with the formation of D-aminoacyl-tRNA entities in vivo and helps enforce protein L-homochirality. The chain is D-aminoacyl-tRNA deacylase (DTD1) from Eremothecium gossypii (strain ATCC 10895 / CBS 109.51 / FGSC 9923 / NRRL Y-1056) (Yeast).